Here is an 862-residue protein sequence, read N- to C-terminus: Alpha,alpha-trehalose-phosphate synthase [UDP-forming] 5 (862 aa).

Serine 5 is subject to Phosphoserine. Residue threonine 32 is modified to Phosphothreonine. Positions 60-546 (DRIIIVGNQL…ARSFIQDLER (487 aa)) are glycosyltransferase.

It in the N-terminal section; belongs to the glycosyltransferase 20 family. The protein in the C-terminal section; belongs to the trehalose phosphatase family. Binds to the phosphopeptide-binding site of GRF/14-3-3 and to MBF1c. Both Ser-5 and Thr-32 must be phosphorylated for binding to GRF/14-3-3. In terms of tissue distribution, low expression in leaves, stems, flower buds, flowers and siliques.

It catalyses the reaction D-glucose 6-phosphate + UDP-alpha-D-glucose = alpha,alpha-trehalose 6-phosphate + UDP + H(+). This chain is Alpha,alpha-trehalose-phosphate synthase [UDP-forming] 5 (TPS5), found in Arabidopsis thaliana (Mouse-ear cress).